The chain runs to 383 residues: Protein delta homolog 1 (383 aa).

Residues Met-1–Gly-23 form the signal peptide. EGF-like domains lie at Ala-24–Glu-55, Thr-59–Glu-86, Asp-88–Gln-125, Lys-127–Glu-168, Val-170–Ser-206, and Pro-208–Ala-245. The Extracellular portion of the chain corresponds to Ala-24–Cys-306. 17 disulfides stabilise this stretch: Cys-26-Cys-37, Cys-30-Cys-43, Cys-45-Cys-54, Cys-63-Cys-68, Cys-76-Cys-85, Cys-92-Cys-103, Cys-97-Cys-113, Cys-115-Cys-124, Cys-131-Cys-144, Cys-138-Cys-156, Cys-158-Cys-167, Cys-174-Cys-185, Cys-179-Cys-194, Cys-196-Cys-205, Cys-212-Cys-223, Cys-217-Cys-233, and Cys-235-Cys-244. Residues Phe-307 to Leu-327 form a helical membrane-spanning segment. The Cytoplasmic segment spans residues Asn-328 to Ile-383.

Monomer. Interacts with SH3RF2. Post-translationally, glycosylated. As to expression, pancreas and adrenal glands (at protein level).

It is found in the membrane. It localises to the cytoplasm. Its function is as follows. May have a role in neuroendocrine differentiation. Inhibits adipocyte differentiation. The protein is Protein delta homolog 1 (Dlk1) of Rattus norvegicus (Rat).